Consider the following 258-residue polypeptide: UPF0246 protein MS0374 (258 aa).

Belongs to the UPF0246 family.

The chain is UPF0246 protein MS0374 from Mannheimia succiniciproducens (strain KCTC 0769BP / MBEL55E).